The following is a 249-amino-acid chain: Small ribosomal subunit protein eS6 (249 aa).

The segment covering 216-229 has biased composition (basic and acidic residues); sequence RMKEAKEKRQEQIA. The interval 216 to 249 is disordered; sequence RMKEAKEKRQEQIAKRRRLSSLRASTSKSESSQK. S235, S236, S240, S244, and S247 each carry phosphoserine. Over residues 236-249 the composition is skewed to low complexity; sequence SLRASTSKSESSQK.

This sequence belongs to the eukaryotic ribosomal protein eS6 family. Component of the small ribosomal subunit. Part of the small subunit (SSU) processome, composed of more than 70 proteins and the RNA chaperone small nucleolar RNA (snoRNA) U3. Post-translationally, ribosomal protein S6 is the major substrate of protein kinases in eukaryote ribosomes. The phosphorylation is stimulated by growth factors, tumor promoting agents, and mitogens. It is dephosphorylated at growth arrest.

It localises to the cytoplasm. The protein resides in the nucleus. The protein localises to the nucleolus. Its function is as follows. Component of the 40S small ribosomal subunit. Plays an important role in controlling cell growth and proliferation through the selective translation of particular classes of mRNA. Part of the small subunit (SSU) processome, first precursor of the small eukaryotic ribosomal subunit. During the assembly of the SSU processome in the nucleolus, many ribosome biogenesis factors, an RNA chaperone and ribosomal proteins associate with the nascent pre-rRNA and work in concert to generate RNA folding, modifications, rearrangements and cleavage as well as targeted degradation of pre-ribosomal RNA by the RNA exosome. The polypeptide is Small ribosomal subunit protein eS6 (RPS6) (Gallus gallus (Chicken)).